A 698-amino-acid chain; its full sequence is Methionine--tRNA ligase (698 aa).

The short motif at 18 to 28 (PYANGDLHVGH) is the 'HIGH' region element. C149, C152, C161, and C165 together coordinate Zn(2+). T350 lines the ATP pocket. A disordered region spans residues 567–590 (EAADAGDEEGEDEDEEPPAADLEP). Positions 570–584 (DAGDEEGEDEDEEPP) are enriched in acidic residues. Positions 600 to 698 (DFQDLDIRVA…EDAEPGTKVQ (99 aa)) constitute a tRNA-binding domain.

This sequence belongs to the class-I aminoacyl-tRNA synthetase family. MetG type 1 subfamily. Homodimer. The cofactor is Zn(2+).

Its subcellular location is the cytoplasm. It catalyses the reaction tRNA(Met) + L-methionine + ATP = L-methionyl-tRNA(Met) + AMP + diphosphate. Functionally, is required not only for elongation of protein synthesis but also for the initiation of all mRNA translation through initiator tRNA(fMet) aminoacylation. The sequence is that of Methionine--tRNA ligase from Natronomonas pharaonis (strain ATCC 35678 / DSM 2160 / CIP 103997 / JCM 8858 / NBRC 14720 / NCIMB 2260 / Gabara) (Halobacterium pharaonis).